A 274-amino-acid chain; its full sequence is MDRYSRRNLEDLVVPNYQETSDSYPSPDMWGTGWSMNSSEAAEKCFDYDVIHNGFSGGLYSQMEMDMGTSEQVEEETKKLKASGCFDRSLHDFDEIQHMDDMFLSSILEDVPGNENFLSFKESDNNNSSSSSYLDTTDGREVPLFHYNWETCQDMPLMEEDAPMNLCEENKEEASAEEVVLQDLQRATEMLTDDTRKCFRDTFYRLAKNSQQKSDSNSDEFLEDRTRETEFETKLNRQSRGQSHIQQDGIQHEKYASTEETFFCSRIREFHHIW.

The segment at 209–249 (NSQQKSDSNSDEFLEDRTRETEFETKLNRQSRGQSHIQQDG) is disordered. A compositionally biased stretch (basic and acidic residues) spans 223–235 (EDRTRETEFETKL). Residues 236–249 (NRQSRGQSHIQQDG) show a composition bias toward polar residues.

As to quaternary structure, interacts with REV8.

Functionally, probable transcriptional coactivator. This is Protein LNK4 from Arabidopsis thaliana (Mouse-ear cress).